Reading from the N-terminus, the 282-residue chain is Acetyl-coenzyme A carboxylase carboxyl transferase subunit beta (282 aa).

In terms of domain architecture, CoA carboxyltransferase N-terminal spans 29–282 (LPINCPSCSA…LSSLLGLHQG (254 aa)). Cys-33, Cys-36, Cys-52, and Cys-55 together coordinate Zn(2+). The segment at 33-55 (CPSCSARIAAEALQRNLKVCPKC) adopts a C4-type zinc-finger fold.

The protein belongs to the AccD/PCCB family. As to quaternary structure, acetyl-CoA carboxylase is a heterohexamer composed of biotin carboxyl carrier protein (AccB), biotin carboxylase (AccC) and two subunits each of ACCase subunit alpha (AccA) and ACCase subunit beta (AccD). The cofactor is Zn(2+).

The protein localises to the cytoplasm. The enzyme catalyses N(6)-carboxybiotinyl-L-lysyl-[protein] + acetyl-CoA = N(6)-biotinyl-L-lysyl-[protein] + malonyl-CoA. It participates in lipid metabolism; malonyl-CoA biosynthesis; malonyl-CoA from acetyl-CoA: step 1/1. Functionally, component of the acetyl coenzyme A carboxylase (ACC) complex. Biotin carboxylase (BC) catalyzes the carboxylation of biotin on its carrier protein (BCCP) and then the CO(2) group is transferred by the transcarboxylase to acetyl-CoA to form malonyl-CoA. The protein is Acetyl-coenzyme A carboxylase carboxyl transferase subunit beta of Syntrophomonas wolfei subsp. wolfei (strain DSM 2245B / Goettingen).